The primary structure comprises 217 residues: Probable transaldolase (217 aa).

K83 functions as the Schiff-base intermediate with substrate in the catalytic mechanism.

This sequence belongs to the transaldolase family. Type 3B subfamily.

It localises to the cytoplasm. It catalyses the reaction D-sedoheptulose 7-phosphate + D-glyceraldehyde 3-phosphate = D-erythrose 4-phosphate + beta-D-fructose 6-phosphate. Its pathway is carbohydrate degradation; pentose phosphate pathway; D-glyceraldehyde 3-phosphate and beta-D-fructose 6-phosphate from D-ribose 5-phosphate and D-xylulose 5-phosphate (non-oxidative stage): step 2/3. In terms of biological role, transaldolase is important for the balance of metabolites in the pentose-phosphate pathway. This chain is Probable transaldolase, found in Rhizorhabdus wittichii (strain DSM 6014 / CCUG 31198 / JCM 15750 / NBRC 105917 / EY 4224 / RW1) (Sphingomonas wittichii).